The sequence spans 211 residues: Pyridoxine/pyridoxamine 5'-phosphate oxidase (211 aa).

Residues 7–10 (RREY) and Lys-65 each bind substrate. FMN contacts are provided by residues 60 to 65 (RIVLLK), 75 to 76 (YT), Arg-81, Lys-82, and Gln-104. Residues Tyr-122, Arg-126, and Ser-130 each coordinate substrate. FMN contacts are provided by residues 139–140 (QS) and Trp-184. Substrate is bound at residue 190–192 (RLH). Residue Arg-194 coordinates FMN.

The protein belongs to the pyridoxamine 5'-phosphate oxidase family. As to quaternary structure, homodimer. The cofactor is FMN.

The catalysed reaction is pyridoxamine 5'-phosphate + O2 + H2O = pyridoxal 5'-phosphate + H2O2 + NH4(+). It carries out the reaction pyridoxine 5'-phosphate + O2 = pyridoxal 5'-phosphate + H2O2. It functions in the pathway cofactor metabolism; pyridoxal 5'-phosphate salvage; pyridoxal 5'-phosphate from pyridoxamine 5'-phosphate: step 1/1. The protein operates within cofactor metabolism; pyridoxal 5'-phosphate salvage; pyridoxal 5'-phosphate from pyridoxine 5'-phosphate: step 1/1. Functionally, catalyzes the oxidation of either pyridoxine 5'-phosphate (PNP) or pyridoxamine 5'-phosphate (PMP) into pyridoxal 5'-phosphate (PLP). This chain is Pyridoxine/pyridoxamine 5'-phosphate oxidase, found in Vibrio campbellii (strain ATCC BAA-1116).